A 310-amino-acid chain; its full sequence is MNRKYIPFGLALLFCLTPFVSSPIALVIGFLLASFGLVPTELPIASFTKKLLSYSIIGLGFGINFEQALSVTSDGIGLIIATIVGTLVIGSLIAKVIKLETTTAYLISSGTAICGGSAIAAVAPAIRAKDEQIGLALATVFVLNSLALFIFPVIGHALNLDQHTFGTWAAIAIHDTSSVVGAASAYGEEALTTATTLKLARALWIIPVALISAVIFSRGNKENGSKKLVIPYFIFWYCAAIAFSDFFPQLEVVYHGIFTIAKQALVVCLFLIGCSISISKLKSSGPKPLLFGVTLWVLISTTSLSWLVLR.

Helical transmembrane passes span 7–29 (PFGL…LVIG), 44–63 (IASF…GFGI), 75–94 (GIGL…SLIA), 104–126 (AYLI…APAI), 133–155 (IGLA…PVIG), 165–187 (FGTW…SAYG), 199–218 (LARA…IFSR), 228–250 (LVIP…FPQL), 257–279 (IFTI…ISIS), and 289–308 (LLFG…SWLV).

Belongs to the UPF0324 family.

It localises to the cell membrane. The protein is UPF0324 membrane protein VP0936 of Vibrio parahaemolyticus serotype O3:K6 (strain RIMD 2210633).